We begin with the raw amino-acid sequence, 819 residues long: Leucine--tRNA ligase (819 aa).

Residues 42-52 carry the 'HIGH' region motif; it reads PYPSGRLHMGH. Positions 576–580 match the 'KMSKS' region motif; it reads KMSKS. Lys-579 contributes to the ATP binding site.

This sequence belongs to the class-I aminoacyl-tRNA synthetase family.

Its subcellular location is the cytoplasm. It catalyses the reaction tRNA(Leu) + L-leucine + ATP = L-leucyl-tRNA(Leu) + AMP + diphosphate. The polypeptide is Leucine--tRNA ligase (Nitrosococcus oceani (strain ATCC 19707 / BCRC 17464 / JCM 30415 / NCIMB 11848 / C-107)).